We begin with the raw amino-acid sequence, 91 residues long: EEKVPYNVLKTKPVGIEKSVDEVGHISKVDETLSFQERLKGDFSQRPASITKKTAVKQVKESYSMADLNKMNDRELVETLGSIKWHQYTDL.

Zn(2+) serves as cofactor.

The protein resides in the secreted. In terms of biological role, this protein is a metalloprotease with gelatinolytic and collagenolytic activity and is a component of the non-hemolytic enterotoxin complex (NHE). The polypeptide is Non-hemolytic enterotoxin 105 kDa component (Bacillus cereus).